The chain runs to 314 residues: 4-hydroxy-3-methylbut-2-enyl diphosphate reductase (314 aa).

Residue Cys-12 coordinates [4Fe-4S] cluster. 2 residues coordinate (2E)-4-hydroxy-3-methylbut-2-enyl diphosphate: His-41 and His-74. Dimethylallyl diphosphate contacts are provided by His-41 and His-74. Isopentenyl diphosphate contacts are provided by His-41 and His-74. Cys-96 contacts [4Fe-4S] cluster. His-124 provides a ligand contact to (2E)-4-hydroxy-3-methylbut-2-enyl diphosphate. A dimethylallyl diphosphate-binding site is contributed by His-124. His-124 is an isopentenyl diphosphate binding site. Residue Glu-126 is the Proton donor of the active site. Residue Thr-167 participates in (2E)-4-hydroxy-3-methylbut-2-enyl diphosphate binding. Cys-197 lines the [4Fe-4S] cluster pocket. Ser-225, Ser-226, Asn-227, and Ser-269 together coordinate (2E)-4-hydroxy-3-methylbut-2-enyl diphosphate. Dimethylallyl diphosphate-binding residues include Ser-225, Ser-226, Asn-227, and Ser-269. Residues Ser-225, Ser-226, Asn-227, and Ser-269 each contribute to the isopentenyl diphosphate site.

This sequence belongs to the IspH family. It depends on [4Fe-4S] cluster as a cofactor.

The catalysed reaction is isopentenyl diphosphate + 2 oxidized [2Fe-2S]-[ferredoxin] + H2O = (2E)-4-hydroxy-3-methylbut-2-enyl diphosphate + 2 reduced [2Fe-2S]-[ferredoxin] + 2 H(+). It carries out the reaction dimethylallyl diphosphate + 2 oxidized [2Fe-2S]-[ferredoxin] + H2O = (2E)-4-hydroxy-3-methylbut-2-enyl diphosphate + 2 reduced [2Fe-2S]-[ferredoxin] + 2 H(+). It functions in the pathway isoprenoid biosynthesis; dimethylallyl diphosphate biosynthesis; dimethylallyl diphosphate from (2E)-4-hydroxy-3-methylbutenyl diphosphate: step 1/1. Its pathway is isoprenoid biosynthesis; isopentenyl diphosphate biosynthesis via DXP pathway; isopentenyl diphosphate from 1-deoxy-D-xylulose 5-phosphate: step 6/6. Catalyzes the conversion of 1-hydroxy-2-methyl-2-(E)-butenyl 4-diphosphate (HMBPP) into a mixture of isopentenyl diphosphate (IPP) and dimethylallyl diphosphate (DMAPP). Acts in the terminal step of the DOXP/MEP pathway for isoprenoid precursor biosynthesis. The sequence is that of 4-hydroxy-3-methylbut-2-enyl diphosphate reductase from Psychromonas ingrahamii (strain DSM 17664 / CCUG 51855 / 37).